Consider the following 372-residue polypeptide: Aminomethyltransferase (372 aa).

It belongs to the GcvT family. In terms of assembly, the glycine cleavage system is composed of four proteins: P, T, L and H.

The enzyme catalyses N(6)-[(R)-S(8)-aminomethyldihydrolipoyl]-L-lysyl-[protein] + (6S)-5,6,7,8-tetrahydrofolate = N(6)-[(R)-dihydrolipoyl]-L-lysyl-[protein] + (6R)-5,10-methylene-5,6,7,8-tetrahydrofolate + NH4(+). In terms of biological role, the glycine cleavage system catalyzes the degradation of glycine. The polypeptide is Aminomethyltransferase (Synechococcus elongatus (strain ATCC 33912 / PCC 7942 / FACHB-805) (Anacystis nidulans R2)).